We begin with the raw amino-acid sequence, 240 residues long: LexA repressor (240 aa).

Residues 26–46 constitute a DNA-binding region (H-T-H motif); that stretch reads FDEMKDALDLASKSGIHRLIT. Positions 78–113 are disordered; it reads QPRRGFSPSVIEGSLGKPQPVQPPAPAKPANDENNS. Residues Ser160 and Lys198 each act as for autocatalytic cleavage activity in the active site.

This sequence belongs to the peptidase S24 family. In terms of assembly, homodimer.

It carries out the reaction Hydrolysis of Ala-|-Gly bond in repressor LexA.. Its function is as follows. Represses a number of genes involved in the response to DNA damage (SOS response), including recA and lexA. In the presence of single-stranded DNA, RecA interacts with LexA causing an autocatalytic cleavage which disrupts the DNA-binding part of LexA, leading to derepression of the SOS regulon and eventually DNA repair. The polypeptide is LexA repressor (Rhizobium rhizogenes (strain K84 / ATCC BAA-868) (Agrobacterium radiobacter)).